The following is a 223-amino-acid chain: Uracil-DNA glycosylase (223 aa).

The active-site Proton acceptor is Asp-61.

This sequence belongs to the uracil-DNA glycosylase (UDG) superfamily. UNG family.

It localises to the cytoplasm. It carries out the reaction Hydrolyzes single-stranded DNA or mismatched double-stranded DNA and polynucleotides, releasing free uracil.. Functionally, excises uracil residues from the DNA which can arise as a result of misincorporation of dUMP residues by DNA polymerase or due to deamination of cytosine. This is Uracil-DNA glycosylase from Tolumonas auensis (strain DSM 9187 / NBRC 110442 / TA 4).